A 579-amino-acid polypeptide reads, in one-letter code: MHPRYSPAPPPQQQQQMGGPPHQQQGGGGGGGGSMRGPSNAQQLPPQIPRSQNYSNGSSSSAAAAPLTSRSAFPGAPLTASAVALKGALPQRPPAMTSPAAAAAGAALAAGAPYRGAASWTPQGYAPAAAAAAAAVAQQAAYRYTAPLPQPAYAAYTPHTATTPATTTYGQRVPTAASPSNTNSSSSSNTGSQSGTLSTSLSNTTNTNTNMGPNGTVQNQNQQGGEQLSKTNLYIRGLQQGTTDKDLVNMCAQYGTIISTKAILDKTTNKCKGYGFVDFEQPAFAECAVKGLQGKGVQAQMAKQQEQDPTNLYIANLPPHFKETDLEAMLSKYGQVVSTRILRDQQMNSKGVGFARMESREKCEQIIQMFNGNTIPGAKDPLLVKFADGGPKKKNLFKTPDPNARAWRDVSAEGIPVAYDPTMQQNGVSVNVGTPIGVPYSRFSAPQVGGYPVAGSQWIPGYMMTTQVDDQTSYSPQYMQMAAAPQLGVTSYKPEAVNQVQPRGISMMVSGDTGVPYGTMMPQLATLQIGNSYISPTYPYYAPPPTIIPTMPMTDSEQASTAASPDEAYTQYPHQAAPK.

The span at Met-1–Gln-12 shows a compositional bias: pro residues. The segment at Met-1 to Pro-66 is disordered. At Tyr-5 the chain carries Phosphotyrosine. Low complexity predominate over residues Gln-13 to Gln-24. Residues Gln-25–Met-35 are compositionally biased toward gly residues. Polar residues predominate over residues Gly-37–Tyr-54. The segment covering Ser-55–Pro-66 has biased composition (low complexity). 2 positions are modified to phosphotyrosine: Tyr-125 and Tyr-142. Residues Pro-164–Gly-225 form a disordered region. Positions Ser-178–Gly-225 are enriched in low complexity. RRM domains are found at residues Thr-231–Gln-304 and Thr-310–Gly-389. Residues Met-553–Lys-579 form a disordered region.

In terms of biological role, has a role in the perception of gravity. The polypeptide is Protein alan shepard (Drosophila sechellia (Fruit fly)).